We begin with the raw amino-acid sequence, 566 residues long: E3 ubiquitin-protein ligase RNF220 (566 aa).

K277 is covalently cross-linked (Glycyl lysine isopeptide (Lys-Gly) (interchain with G-Cter in SUMO2)). A disordered region spans residues 277–297 (KREGESPTASPHSSATDDLHH). S390 is modified (phosphoserine). Residues 485 to 513 (EDSAVTTFEALKARVRELERQLSRGDRYK) are a coiled coil. Residues 514–522 (CLICMDSYS) form a required for targeting to the cytoplasm region. The RING-type zinc finger occupies 514 to 553 (CLICMDSYSMPLTSIQCWHVHCEECWLRTLGAKKLCPQCN).

Interacts with SIN3B. Interacts with CTNNB1 (via Armadillo repeats 2-8). Interacts with USP7 (via MATH domain). In terms of processing, auto-ubiquitinated; leads to proteasomal degradation. Ubiquitously expressed. Abundant in brain and spinal cord, particularly in the cerebellum and cerebral cortex. In fetal tissues expressed in the cerebellum, spinal cord and cortex.

The protein resides in the cytoplasm. The protein localises to the nucleus. It catalyses the reaction S-ubiquitinyl-[E2 ubiquitin-conjugating enzyme]-L-cysteine + [acceptor protein]-L-lysine = [E2 ubiquitin-conjugating enzyme]-L-cysteine + N(6)-ubiquitinyl-[acceptor protein]-L-lysine.. It functions in the pathway protein modification; protein ubiquitination. Functionally, E3 ubiquitin-protein ligase that promotes the ubiquitination and proteasomal degradation of SIN3B. Independently of its E3 ligase activity, acts as a CTNNB1 stabilizer through USP7-mediated deubiquitination of CTNNB1 promoting Wnt signaling. Plays a critical role in the regulation of nuclear lamina. The sequence is that of E3 ubiquitin-protein ligase RNF220 (RNF220) from Homo sapiens (Human).